The following is a 599-amino-acid chain: Elongation factor 4 (599 aa).

The tr-type G domain occupies 2 to 184 (NHIRNFSIIA…RLVRDIPAPE (183 aa)). GTP contacts are provided by residues 14–19 (DHGKST) and 131–134 (NKID).

The protein belongs to the TRAFAC class translation factor GTPase superfamily. Classic translation factor GTPase family. LepA subfamily.

It is found in the cell inner membrane. The enzyme catalyses GTP + H2O = GDP + phosphate + H(+). In terms of biological role, required for accurate and efficient protein synthesis under certain stress conditions. May act as a fidelity factor of the translation reaction, by catalyzing a one-codon backward translocation of tRNAs on improperly translocated ribosomes. Back-translocation proceeds from a post-translocation (POST) complex to a pre-translocation (PRE) complex, thus giving elongation factor G a second chance to translocate the tRNAs correctly. Binds to ribosomes in a GTP-dependent manner. The chain is Elongation factor 4 from Yersinia pestis (strain Pestoides F).